The chain runs to 322 residues: MHLHSPSLMADGSFSLSGHLLRSPGGNPSRLHSIEAILGFVKEDSVLGSFQSEISPRNAKEVDKRSSRHCLHKMTEEIHPQQEHLEDGQTDGYGDPYLGKTSSECLSPGLSTSNSDNKLSDDEQQPKKKHRRNRTTFTTYQLHELERAFEKSHYPDVYSREELAMKVNLPEVRVQVWFQNRRAKWRRQEKLEVTSMKLQDSPMLSFNRSPQPSAMSALSSSLPLDSWLTPTLSNSTALQSLPGFVTTPPSLPGSYTPPPFINPVSVGHALQPLGAMGPPPPYQCGANFVDKYPLEETDPRNNSIASLRMKAKEHIQFIGKPW.

The short motif at 32 to 39 (HSIEAILG) is the Octapeptide motif element. The segment covering 75–87 (TEEIHPQQEHLED) has biased composition (basic and acidic residues). Positions 75–136 (TEEIHPQQEH…KKKHRRNRTT (62 aa)) are disordered. A compositionally biased stretch (polar residues) spans 100 to 117 (KTSSECLSPGLSTSNSDN). Residues 130-189 (HRRNRTTFTTYQLHELERAFEKSHYPDVYSREELAMKVNLPEVRVQVWFQNRRAKWRRQE) constitute a DNA-binding region (homeobox). The OAR signature appears at 302–315 (NSIASLRMKAKEHI). Residues 308–312 (RMKAK) carry the Nuclear localization signal motif.

Belongs to the paired homeobox family. Bicoid subfamily. As to expression, highly expressed in anterior neural plate followed by neural retina, pigmented epithelium, in pineal gland, diencephalon floor and epiphysis. At later stages, the neuroretina remains the primary site of expression. No expression in the developing lens and cornea.

It is found in the nucleus. Plays a critical role in eye formation by regulating the initial specification of retinal cells and/or their subsequent proliferation. The protein is Retinal homeobox protein Rx-A (rax-a) of Xenopus laevis (African clawed frog).